Consider the following 472-residue polypeptide: FAD-dependent monooxygenase ltmM (472 aa).

A helical transmembrane segment spans residues 7 to 27; sequence VIIVGGSVAGLSLAHCLEKIG. FAD-binding residues include glutamate 34, glycine 48, and arginine 107. An N-linked (GlcNAc...) asparagine glycan is attached at asparagine 186. Aspartate 306 and alanine 319 together coordinate FAD. The helical transmembrane segment at 450 to 470 threads the bilayer; the sequence is IVYALYLVAAAAFILYCLSSL.

Belongs to the paxM FAD-dependent monooxygenase family. It depends on FAD as a cofactor.

The protein resides in the membrane. The protein operates within secondary metabolite biosynthesis. Its function is as follows. FAD-dependent monooxygenase; part of the gene cluster that mediates the biosynthesis of lolitrems, indole-diterpene mycotoxins that are potent tremorgens in mammals, and are synthesized by clavicipitaceous fungal endophytes in association with their grass hosts. The geranylgeranyl diphosphate (GGPP) synthase ltmG is proposed to catalyze the first step in lolitrem biosynthesis. LtmG catalyzes a series of iterative condensations of isopentenyl diphosphate (IPP) with dimethylallyl diphosphate (DMAPP), geranyl diphosphate (GPP), and farnesyl diphosphate (FPP), to form GGPP. GGPP then condenses with indole-3-glycerol phosphate to form 3-geranylgeranylindole, an acyclic intermediate, to be incorporated into paxilline. Either ltmG or ltmC could be responsible for this step, as both are putative prenyl transferases. The FAD-dependent monooxygenase ltmM then catalyzes the epoxidation of the two terminal alkenes of the geranylgeranyl moiety, which is subsequently cyclized by ltmC, to paspaline. The cytochrome P450 monooxygenases ltmQ and ltmP can sequentially oxidize paspaline to terpendole E and terpendole F. Alternatively, ltmP converts paspaline to an intermediate which is oxidized by ltmQ to terpendole F. LtmF, ltmK, ltmE and ltmJ appear to be unique to the epichloe endophytes. The prenyltransferase ltmF is involved in the 27-hydroxyl-O-prenylation. The cytochrome P450 monooxygenase ltmK is required for the oxidative acetal ring formation. The multi-functional prenyltransferase ltmE is required for C20- and C21-prenylations of the indole ring of paspalanes and acts together with the cytochrome P450 monooxygenase ltmJ to yield lolitremanes by multiple oxidations and ring closures. The stereoisomer pairs of lolitriol and lolitrem N or lolitrem B and lolitrem F may be attributed to variations in the way in which ring closure can occur under the action of ltmJ. While the major product of this pathway is lolitrem B, the prenyl transferases and cytochrome P450 monooxygenases identified in this pathway have a remarkable versatility in their regio- and stereo-specificities to generate a diverse range of metabolites that are products of a metabolic grid rather than a linear pathway. This is FAD-dependent monooxygenase ltmM (ltmM) from Epichloe festucae (strain Fl1).